The primary structure comprises 1279 residues: Photoreceptor cilium actin regulator (1279 aa).

A lipid anchor (N-myristoyl glycine) is attached at Gly-2. The S-palmitoyl cysteine moiety is linked to residue Cys-3. Disordered stretches follow at residues 101-168 (NKPQ…KGRV), 380-598 (AAQV…SHVE), 802-821 (EVSE…ENLP), 860-1107 (ASHP…TTAK), and 1127-1279 (KSSS…KEIS). Basic and acidic residues predominate over residues 126–168 (FSGKESKENTPQETSKGNRESVCHQPDSQDHCRQSATESKGRV). Residues 477–491 (SEEEDCSPEEEDELS) are compositionally biased toward acidic residues. 2 stretches are compositionally biased toward basic and acidic residues: residues 535–547 (LKMK…RIKF) and 580–598 (GPER…SHVE). Residues 804–818 (SESEDISGDVEEDLE) show a composition bias toward acidic residues. 3 stretches are compositionally biased toward polar residues: residues 886-901 (GSGS…SGST), 913-925 (DLNS…PSSE), and 955-965 (TNPTPGQSRTL). Residues 972-990 (FSRDPHSSEASRKGPERSL) show a composition bias toward basic and acidic residues. The segment covering 1047–1062 (RKTTSPPCQHPQSNPA) has biased composition (polar residues). The segment covering 1076–1090 (PSSASCSSPSVSPSR) has biased composition (low complexity). Positions 1091 to 1100 (GSKDSIHSED) are enriched in basic and acidic residues. Polar residues predominate over residues 1226-1241 (WNNSRVPELQGSSTKR). A compositionally biased stretch (basic and acidic residues) spans 1259–1279 (RMNRGQDRPQPESQPQHKEIS).

As to expression, specifically expressed in retina.

Its subcellular location is the cell projection. It localises to the cilium. The protein localises to the photoreceptor outer segment. The protein resides in the photoreceptor inner segment. Its function is as follows. Plays an essential role for normal photoreceptor cell maintenance and vision. This chain is Photoreceptor cilium actin regulator, found in Mus musculus (Mouse).